A 204-amino-acid polypeptide reads, in one-letter code: MAAVTNADVEAVDFDPDDDDLMDEDAADPTPAPAPRLRSTIAGGGGGGGGGDDGQRKTKGRGFRDDAAPRDSRLAGAGRASDFDSLGSDGGPGPVRSIEGWIVLVTGVHEEAQEDDLHNIFRDFGQVKNLHLNLDRRTGFVKGYALIEYETFEEAQAAIKALDGTELLTQIISVDWAFSNGPVKRRNIRKRSPRRSRSPPRRRY.

Residues 1 to 92 (MAAVTNADVE…FDSLGSDGGP (92 aa)) are disordered. Residues 10–27 (EAVDFDPDDDDLMDEDAA) show a composition bias toward acidic residues. A compositionally biased stretch (gly residues) spans 42 to 52 (AGGGGGGGGGD). Basic and acidic residues predominate over residues 62 to 73 (GFRDDAAPRDSR). An RRM domain is found at 101-179 (WIVLVTGVHE…QIISVDWAFS (79 aa)).

The protein belongs to the RBM8A family. In terms of assembly, heterodimer with MAGO1. Heterodimer with MAGO2. Part of the mRNA splicing-dependent exon junction complex (EJC); the core complex contains MLN51/CASC3, EIF4A3, MAGO and Y14.

It localises to the nucleus. Its subcellular location is the cytoplasm. Its function is as follows. Core component of the splicing-dependent multiprotein exon junction complex (EJC) deposited at splice junctions on mRNAs. The EJC is a dynamic structure consisting of core proteins and several peripheral nuclear and cytoplasmic associated factors that join the complex only transiently either during EJC assembly or during subsequent mRNA metabolism. The EJC marks the position of the exon-exon junction in the mature mRNA for the gene expression machinery and the core components remain bound to spliced mRNAs throughout all stages of mRNA metabolism thereby influencing downstream processes including nuclear mRNA export, subcellular mRNA localization, translation efficiency and nonsense-mediated mRNA decay (NMD). The MAGO-Y14 heterodimer inhibits the ATPase activity of EIF4A3, thereby trapping the ATP-bound EJC core onto spliced mRNA in a stable conformation. The MAGO-Y14 heterodimer interacts with the EJC key regulator PYM leading to EJC disassembly in the cytoplasm. EJC core heterodimers play essential roles in plant growth and development, and pollen and seed development. The MAGO-Y14 heterodimer selectively binds to the UDT1 (UNDEVELOPED TAPETUM 1) pre-mRNA transcript and regulates the splicing of UDT1, a key regulator in stamen development. The polypeptide is RNA-binding protein Y14A (Oryza sativa subsp. japonica (Rice)).